Consider the following 486-residue polypeptide: Glutamate--tRNA ligase (486 aa).

A 'HIGH' region motif is present at residues 11–21 (PSPTGLLHIGN). A 'KMSKS' region motif is present at residues 255 to 259 (KLSKR). Lysine 258 serves as a coordination point for ATP.

The protein belongs to the class-I aminoacyl-tRNA synthetase family. Glutamate--tRNA ligase type 1 subfamily. As to quaternary structure, monomer.

It localises to the cytoplasm. The enzyme catalyses tRNA(Glu) + L-glutamate + ATP = L-glutamyl-tRNA(Glu) + AMP + diphosphate. Functionally, catalyzes the attachment of glutamate to tRNA(Glu) in a two-step reaction: glutamate is first activated by ATP to form Glu-AMP and then transferred to the acceptor end of tRNA(Glu). This is Glutamate--tRNA ligase from Streptococcus pneumoniae serotype 19F (strain G54).